Reading from the N-terminus, the 444-residue chain is Docking protein 3 (444 aa).

The region spanning 7–123 (PVKDGLLYQQ…WMDPICQLAF (117 aa)) is the PH domain. The segment at 47–66 (DVRDGGLGPGGDRPAGPGRR) is disordered. Position 138 is a phosphoserine (S138). Residues 157–261 (EVAEFPVVVQ…ARQRERLPEL (105 aa)) enclose the IRS-type PTB domain. 3 positions are modified to phosphoserine: S274, S308, and S314. Residue Y325 is modified to Phosphotyrosine. Residues 354 to 390 (GLSNGGPEAQEGPPGGRSPLGSPIYHNSEELSWPGSA) are disordered. A compositionally biased stretch (low complexity) spans 358 to 376 (GGPEAQEGPPGGRSPLGSP). Position 371 is a phosphoserine (S371).

This sequence belongs to the DOK family. Type A subfamily. As to quaternary structure, on tyrosine phosphorylation, interacts with CSK and INPP5D/SHIP1 via their SH2 domains. Binds ABL1 through the PTB domain and in a kinase-dependent manner. Does not interact with RasGAP. In terms of processing, constitutively tyrosine-phosphorylated. On IL2 stimulation, phosphorylated on C-terminal tyrosine residues possibly by Src kinases. Can also be phosphorylated by ABL1 kinase.

It is found in the cytoplasm. The protein resides in the cell membrane. Functionally, DOK proteins are enzymatically inert adaptor or scaffolding proteins. They provide a docking platform for the assembly of multimolecular signaling complexes. DOK3 is a negative regulator of JNK signaling in B-cells through interaction with INPP5D/SHIP1. May modulate ABL1 function. This is Docking protein 3 (Dok3) from Rattus norvegicus (Rat).